We begin with the raw amino-acid sequence, 238 residues long: Uridylate kinase (238 aa).

Position 12–15 (12–15 (KLSG)) interacts with ATP. Positions 20–25 (GEKGFG) are involved in allosteric activation by GTP. UMP is bound at residue Gly54. ATP contacts are provided by Gly55 and Arg59. Residues Asp72 and 133 to 140 (TGNPYFST) contribute to the UMP site. Residues Tyr166 and Asp169 each contribute to the ATP site.

Belongs to the UMP kinase family. In terms of assembly, homohexamer.

The protein localises to the cytoplasm. The catalysed reaction is UMP + ATP = UDP + ADP. Its pathway is pyrimidine metabolism; CTP biosynthesis via de novo pathway; UDP from UMP (UMPK route): step 1/1. Its activity is regulated as follows. Allosterically activated by GTP. Inhibited by UTP. Catalyzes the reversible phosphorylation of UMP to UDP. This Clostridium botulinum (strain Hall / ATCC 3502 / NCTC 13319 / Type A) protein is Uridylate kinase.